The primary structure comprises 287 residues: Acetylglutamate kinase (287 aa).

Substrate contacts are provided by residues 64 to 65 (GG), R86, and N181.

Belongs to the acetylglutamate kinase family. ArgB subfamily.

The protein localises to the cytoplasm. It carries out the reaction N-acetyl-L-glutamate + ATP = N-acetyl-L-glutamyl 5-phosphate + ADP. It participates in amino-acid biosynthesis; L-arginine biosynthesis; N(2)-acetyl-L-ornithine from L-glutamate: step 2/4. Its function is as follows. Catalyzes the ATP-dependent phosphorylation of N-acetyl-L-glutamate. The protein is Acetylglutamate kinase of Desulforamulus reducens (strain ATCC BAA-1160 / DSM 100696 / MI-1) (Desulfotomaculum reducens).